We begin with the raw amino-acid sequence, 841 residues long: Auxin response factor 24 (841 aa).

A disordered region spans residues 109-140; it reads LPEKQQDGNGSGNGNVSKDKVEEEEVVPPAAT. Residues 148–250 constitute a DNA-binding region (TF-B3); it reads FCKTLTASDT…ELRVGVRRAM (103 aa). 3 disordered regions span residues 366–397, 663–715, and 804–841; these read PRPD…KRAR, QDAL…SRSC, and GALN…SENC. Residues 684 to 695 show a composition bias toward basic and acidic residues; that stretch reads AQHDSAREKHQS. 2 stretches are compositionally biased toward polar residues: residues 701-713 and 830-841; these read KNIQ…GSSR and GLSTPSLNSENC. Residues 713–797 enclose the PB1 domain; sequence RSCKKVHKQG…HKIFIYTREE (85 aa).

Belongs to the ARF family. As to quaternary structure, homodimers and heterodimers. Expressed in roots, culms, leaves and young panicles.

It is found in the nucleus. Its function is as follows. Auxin response factors (ARFs) are transcriptional factors that bind specifically to the DNA sequence 5'-TGTCTC-3' found in the auxin-responsive promoter elements (AuxREs). The sequence is that of Auxin response factor 24 (ARF24) from Oryza sativa subsp. japonica (Rice).